The following is a 332-amino-acid chain: MSLKEKLIVNVHKEEQPHAHNKITVVGVGAVGMACAISILMKDLADELALVDVIEDKLKGEMLDLQHGSLFLRTPKIVSGKDYAVTAHSKLVIITAGARQQEGESRLNLVQRNVNIFKFIIPNVVKYSPDCKLLVVSNPVDILTYVAWKISGFPKHRVIGSGCNLDSARFRHLMAEKLGIHPLSCHGWIVGEHGDSSVPVWSGVNVAGVSLKGLHPDMGTDGDKENWKQVHKQVVDSAYEVIKLKGYTSWAIGLSVADLAETIMKNLRRVHPVSTMVKGMHGINDDVFLSVPCVLGYSGITDVVKMTLKSEEEDKLRKSADTLWGIQKELQF.

NAD(+)-binding positions include 29-57 (GAVG…IEDK) and R99. Residues R106, N138, and R169 each contribute to the substrate site. Residue N138 participates in NAD(+) binding. The active-site Proton acceptor is the H193. Position 248 (T248) interacts with substrate.

The protein belongs to the LDH/MDH superfamily. LDH family. In terms of assembly, homotetramer.

The protein resides in the cytoplasm. It catalyses the reaction (S)-lactate + NAD(+) = pyruvate + NADH + H(+). Its pathway is fermentation; pyruvate fermentation to lactate; (S)-lactate from pyruvate: step 1/1. In terms of biological role, interconverts simultaneously and stereospecifically pyruvate and lactate with concomitant interconversion of NADH and NAD(+). The sequence is that of L-lactate dehydrogenase A chain (LDHA) from Sceloporus woodi (Florida scrub lizard).